The chain runs to 532 residues: Invertase 1 (532 aa).

An N-terminal signal peptide occupies residues 1–19; that stretch reads MLLQAFLFLLAGFAAKISA. A glycan (N-linked (GlcNAc...) asparagine) is linked at N23. Substrate contacts are provided by residues 39–42 and Q60; that span reads WMND. D42 is an active-site residue. N64 is a glycosylation site (N-linked (GlcNAc...) asparagine). 102-103 is a binding site for substrate; sequence YS. Residues N111, N112, N118, and N165 are each glycosylated (N-linked (GlcNAc...) asparagine). Residues 170–171 and E223 each bind substrate; that span reads RD. Residue N275 is glycosylated (N-linked (GlcNAc...) asparagine). W311 is a substrate binding site. N356, N369, N384, N398, and N512 each carry an N-linked (GlcNAc...) asparagine glycan.

Belongs to the glycosyl hydrolase 32 family. In terms of processing, isoform Secreted is glycosylated. Isoform Intracellular is not glycosylated.

It localises to the cytoplasm. The protein resides in the secreted. The enzyme catalyses Hydrolysis of terminal non-reducing beta-D-fructofuranoside residues in beta-D-fructofuranosides.. The sequence is that of Invertase 1 (SUC1) from Saccharomyces cerevisiae (Baker's yeast).